The chain runs to 542 residues: CTP synthase (542 aa).

The tract at residues 1–265 (MARYIFITGG…DQEVLAAFGI (265 aa)) is amidoligase domain. Residue S13 participates in CTP binding. A UTP-binding site is contributed by S13. ATP is bound at residue 14-19 (SLGKGL). Y54 is an L-glutamine binding site. D71 contributes to the ATP binding site. 2 residues coordinate Mg(2+): D71 and E139. CTP contacts are provided by residues 146-148 (DIE), 186-191 (KTKPTQ), and K222. Residues 186–191 (KTKPTQ) and K222 contribute to the UTP site. 238–240 (RDV) lines the ATP pocket. Positions 291–541 (TIAIVGKYTG…IAAALEQSRL (251 aa)) constitute a Glutamine amidotransferase type-1 domain. Residue G353 participates in L-glutamine binding. C380 functions as the Nucleophile; for glutamine hydrolysis in the catalytic mechanism. L-glutamine-binding positions include 381–384 (FGMQ), E404, and R469. Residues H514 and E516 contribute to the active site.

It belongs to the CTP synthase family. As to quaternary structure, homotetramer.

The catalysed reaction is UTP + L-glutamine + ATP + H2O = CTP + L-glutamate + ADP + phosphate + 2 H(+). The enzyme catalyses L-glutamine + H2O = L-glutamate + NH4(+). It carries out the reaction UTP + NH4(+) + ATP = CTP + ADP + phosphate + 2 H(+). It participates in pyrimidine metabolism; CTP biosynthesis via de novo pathway; CTP from UDP: step 2/2. With respect to regulation, allosterically activated by GTP, when glutamine is the substrate; GTP has no effect on the reaction when ammonia is the substrate. The allosteric effector GTP functions by stabilizing the protein conformation that binds the tetrahedral intermediate(s) formed during glutamine hydrolysis. Inhibited by the product CTP, via allosteric rather than competitive inhibition. Its function is as follows. Catalyzes the ATP-dependent amination of UTP to CTP with either L-glutamine or ammonia as the source of nitrogen. Regulates intracellular CTP levels through interactions with the four ribonucleotide triphosphates. This Methylocella silvestris (strain DSM 15510 / CIP 108128 / LMG 27833 / NCIMB 13906 / BL2) protein is CTP synthase.